The chain runs to 205 residues: Transcriptional regulator GfcR (205 aa).

Belongs to the purine/pyrimidine phosphoribosyltransferase family. GfcR subfamily.

The chain is Transcriptional regulator GfcR from Methanococcus maripaludis (strain C7 / ATCC BAA-1331).